Reading from the N-terminus, the 310-residue chain is tRNA pseudouridine synthase B (310 aa).

D49 acts as the Nucleophile in catalysis.

The protein belongs to the pseudouridine synthase TruB family. Type 1 subfamily.

The catalysed reaction is uridine(55) in tRNA = pseudouridine(55) in tRNA. Responsible for synthesis of pseudouridine from uracil-55 in the psi GC loop of transfer RNAs. The sequence is that of tRNA pseudouridine synthase B from Idiomarina loihiensis (strain ATCC BAA-735 / DSM 15497 / L2-TR).